We begin with the raw amino-acid sequence, 720 residues long: Cyclic nucleotide-gated ion channel 17 (720 aa).

Residues 1 to 85 (MELRKDKLLM…SEIVLKWNWV (85 aa)) are Cytoplasmic-facing. Residues 86 to 106 (FIVSCMVALFIDPLYFFVPAI) traverse the membrane as a helical segment. The Extracellular segment spans residues 107 to 121 (GGDKNYPCARTDTSL). A helical membrane pass occupies residues 122–142 (SILVTFFRTIADLFYLLHIFI). Residues 143–178 (KFRTGFIAPNSSTRVFGRGELVMDPKAIAWRYIKSD) lie on the Cytoplasmic side of the membrane. A helical membrane pass occupies residues 179-199 (FIIDLIATLPLPQIVIWFVIS). The Extracellular portion of the chain corresponds to 200–211 (TTKSYRFDHNNN). The chain crosses the membrane as a helical span at residues 212–232 (AIALIVLLQYIPRFYLIIPLS). Topologically, residues 233-252 (SQIVKATGVVTKTAWAGAAY) are cytoplasmic. The chain crosses the membrane as a helical span at residues 253–273 (NLLLYMLASHVLGAAWYILSV). At 274-377 (DRYTSCWKSR…LSTTMFMGET (104 aa)) the chain is on the extracellular side. The helical transmembrane segment at 378-398 (TFAVLIAIFGLVLFAHLIGNM) threads the bilayer. The Cytoplasmic portion of the chain corresponds to 399–720 (QTYLQSLTVR…EPDFSAEHDD (322 aa)). Residues 481–605 (FFSQ…SKKL) and glutamate 552 contribute to the a nucleoside 3',5'-cyclic phosphate site. The calmodulin-binding stretch occupies residues 597-612 (FRRLHSKKLQHTFRFY). Positions 617 to 646 (RTWAACFIQAAWRRYKRRVMENNLTAIESM) constitute an IQ domain.

It belongs to the cyclic nucleotide-gated cation channel (TC 1.A.1.5) family. Homotetramer or heterotetramer. Part of a functional complex containing PSKR1, BAK1, CNGC17, and AHA. Interacts with AHA1, AHA2, and BAK1, but not with PSKR1 or BRI1.

It localises to the cell membrane. Its function is as follows. Probable cyclic nucleotide-gated ion channel. Forms a functional cation-translocating unit with AHAs that is activated by PSKR1/BAK1 and possibly other BAK1/RLK complexes. Required for PSK-induced protoplast expansion. The polypeptide is Cyclic nucleotide-gated ion channel 17 (Arabidopsis thaliana (Mouse-ear cress)).